Consider the following 241-residue polypeptide: Chaperone protein FimC (241 aa).

The signal sequence occupies residues 1–36; sequence MSNKNVNVRKSQEITFCLLAGILMFMAMMVAGRAEA.

This sequence belongs to the periplasmic pilus chaperone family.

It is found in the periplasm. In terms of biological role, required for the biogenesis of type 1 fimbriae. Binds and interact with FimH. This Escherichia coli (strain K12) protein is Chaperone protein FimC (fimC).